The primary structure comprises 395 residues: S-adenosylmethionine synthase (395 aa).

An ATP-binding site is contributed by H16. D18 is a binding site for Mg(2+). E44 is a K(+) binding site. Residues E57 and Q100 each coordinate L-methionine. The flexible loop stretch occupies residues 100-110 (QSPDIAQGVDD). ATP contacts are provided by residues 174–176 (DAK), 241–242 (RF), D250, 256–257 (RK), A273, and K277. D250 serves as a coordination point for L-methionine. An L-methionine-binding site is contributed by K281.

Belongs to the AdoMet synthase family. Homotetramer; dimer of dimers. Requires Mg(2+) as cofactor. K(+) is required as a cofactor.

The protein resides in the cytoplasm. It catalyses the reaction L-methionine + ATP + H2O = S-adenosyl-L-methionine + phosphate + diphosphate. It functions in the pathway amino-acid biosynthesis; S-adenosyl-L-methionine biosynthesis; S-adenosyl-L-methionine from L-methionine: step 1/1. Its function is as follows. Catalyzes the formation of S-adenosylmethionine (AdoMet) from methionine and ATP. The overall synthetic reaction is composed of two sequential steps, AdoMet formation and the subsequent tripolyphosphate hydrolysis which occurs prior to release of AdoMet from the enzyme. In Levilactobacillus brevis (strain ATCC 367 / BCRC 12310 / CIP 105137 / JCM 1170 / LMG 11437 / NCIMB 947 / NCTC 947) (Lactobacillus brevis), this protein is S-adenosylmethionine synthase.